A 124-amino-acid polypeptide reads, in one-letter code: Photoactive yellow protein (124 aa).

The region spanning 22-85 (AEYLPFGAVL…GEFLRFHQTG (64 aa)) is the PAS domain. C68 is modified (S-(4-hydroxycinnamyl)cysteine).

It belongs to the photoactive yellow protein family. In terms of processing, the 4-hydroxycinnamic acid (p-coumaric acid) chromophore is covalently bound via a thioester linkage.

This photoactive protein is a photoreceptor with kinetics similar to that of rhodopsin. The protein is Photoactive yellow protein (pyp) of Cereibacter sphaeroides (strain ATCC 17023 / DSM 158 / JCM 6121 / CCUG 31486 / LMG 2827 / NBRC 12203 / NCIMB 8253 / ATH 2.4.1.) (Rhodobacter sphaeroides).